The sequence spans 277 residues: N-acetylmuramic acid 6-phosphate etherase (277 aa).

One can recognise an SIS domain in the interval 53-216; that stretch reads IIPRVKKGGR…STTIMIELGR (164 aa). The Proton donor role is filled by glutamate 81. The active site involves glutamate 112.

Belongs to the GCKR-like family. MurNAc-6-P etherase subfamily. As to quaternary structure, homodimer.

The enzyme catalyses N-acetyl-D-muramate 6-phosphate + H2O = N-acetyl-D-glucosamine 6-phosphate + (R)-lactate. The protein operates within amino-sugar metabolism; N-acetylmuramate degradation. In terms of biological role, specifically catalyzes the cleavage of the D-lactyl ether substituent of MurNAc 6-phosphate, producing GlcNAc 6-phosphate and D-lactate. This chain is N-acetylmuramic acid 6-phosphate etherase, found in Bacteroides thetaiotaomicron (strain ATCC 29148 / DSM 2079 / JCM 5827 / CCUG 10774 / NCTC 10582 / VPI-5482 / E50).